We begin with the raw amino-acid sequence, 326 residues long: MSFFHTRKYKLILRGLLCLAGCFLMNSCSSSRGNQPADESIYVLSMNRMICDCVSRITGDRVKNIVLIDGAIDPHSYEMVKGDEDRMAMSQLIFCNGLGLEHSASLRKHLEGNPKVVDLGQRLLNKNCFDLLSEEGFPDPHIWTDMRVWGAAVKEMAAALIQQFPQYEEDFQKNADQILSEMEELDRWAARSLSTIPEKNRYLVTGHNAFSYFTRRYLSSDAERVSGEWRSRCISPEGLSPEAQISIRDIMRVVEYISANDVEVVFLEDTLNQDALRKIVSCSKSGQKIRLAKSPLYSDNVCDNYFSTFQHNVRTITEELGGTVLE.

The first 21 residues, 1 to 21 (MSFFHTRKYKLILRGLLCLAG), serve as a signal peptide directing secretion. Residues His75, His141, His207, and Asp299 each coordinate Fe(2+).

Belongs to the bacterial solute-binding protein 9 family. As to quaternary structure, monomer.

Its subcellular location is the periplasm. Part of the ATP-binding cassette (ABC) transport system YtgABCD involved in metal import. Binds Fe(2+), Mn(2+) and Ni(2+), with a preference for Fe(2+) and delivers them to the membrane permease for translocation into the cytoplasm. The chain is Metal-binding protein YtgA from Chlamydia trachomatis serovar D (strain ATCC VR-885 / DSM 19411 / UW-3/Cx).